A 63-amino-acid chain; its full sequence is Beta-defensin 4 (63 aa).

The N-terminal stretch at 1 to 22 (MRLHHLLLAVLFLVLSAGSGFT) is a signal peptide. A Pyrrolidone carboxylic acid modification is found at Gln23. Intrachain disulfides connect Cys31/Cys60, Cys38/Cys53, and Cys43/Cys61.

This sequence belongs to the beta-defensin family. Neutrophilic granules.

Its subcellular location is the secreted. Its function is as follows. Has bactericidal activity. Active against E.coli ML35 and S.aureus 502A. The protein is Beta-defensin 4 (DEFB4) of Bos taurus (Bovine).